The following is a 352-amino-acid chain: Biotin synthase (352 aa).

Residues 44–262 form the Radical SAM core domain; the sequence is NRVQVSTLLS…LAVARIMMPK (219 aa). Residues Cys-59, Cys-63, and Cys-66 each coordinate [4Fe-4S] cluster. [2Fe-2S] cluster is bound by residues Cys-103, Cys-134, Cys-194, and Arg-266.

The protein belongs to the radical SAM superfamily. Biotin synthase family. Homodimer. [4Fe-4S] cluster is required as a cofactor. The cofactor is [2Fe-2S] cluster.

The catalysed reaction is (4R,5S)-dethiobiotin + (sulfur carrier)-SH + 2 reduced [2Fe-2S]-[ferredoxin] + 2 S-adenosyl-L-methionine = (sulfur carrier)-H + biotin + 2 5'-deoxyadenosine + 2 L-methionine + 2 oxidized [2Fe-2S]-[ferredoxin]. Its pathway is cofactor biosynthesis; biotin biosynthesis; biotin from 7,8-diaminononanoate: step 2/2. Catalyzes the conversion of dethiobiotin (DTB) to biotin by the insertion of a sulfur atom into dethiobiotin via a radical-based mechanism. In Ectopseudomonas mendocina (strain ymp) (Pseudomonas mendocina), this protein is Biotin synthase.